Consider the following 141-residue polypeptide: Cystatin (141 aa).

Residues 1 to 26 (MVHSQLPVAAPLRLLCALLLLPSATM) form the signal peptide. Residues 29–129 (GGLYPRSVTD…CHFQVWSRPW (101 aa)) form the Cystatin domain. The short motif at 73–77 (QVVTG) is the Secondary area of contact element. 2 disulfide bridges follow: cysteine 91-cysteine 107 and cysteine 120-cysteine 140.

Belongs to the cystatin family. In terms of tissue distribution, expressed by the venom gland at an extremely low level (at protein level).

It localises to the secreted. Inhibits various C1 cysteine proteases including cathepsin L, papain and cathepsin B. This protein has no toxic activity and its function in the venom is unknown. It may play a role as a housekeeping or regulatory protein. This Tropidechis carinatus (Australian rough-scaled snake) protein is Cystatin.